We begin with the raw amino-acid sequence, 313 residues long: Porphobilinogen deaminase (313 aa).

S-(dipyrrolylmethanemethyl)cysteine is present on C242.

This sequence belongs to the HMBS family. In terms of assembly, monomer. It depends on dipyrromethane as a cofactor.

The catalysed reaction is 4 porphobilinogen + H2O = hydroxymethylbilane + 4 NH4(+). It functions in the pathway porphyrin-containing compound metabolism; protoporphyrin-IX biosynthesis; coproporphyrinogen-III from 5-aminolevulinate: step 2/4. Functionally, tetrapolymerization of the monopyrrole PBG into the hydroxymethylbilane pre-uroporphyrinogen in several discrete steps. In Pseudomonas putida (strain GB-1), this protein is Porphobilinogen deaminase.